A 289-amino-acid polypeptide reads, in one-letter code: MGSGFSLFQKNLSSCYGDRDLLQPGLGDLPESCVALILQNLDPVEICRFSKLNTAFHGASWADFVWESKLPPDYKLILEKILGSFPDNLRKRDIFTFLSRVNSFDEGNKKAWVDKRTGGLCLCTSAKGLSITGIDDRRYWSHIPSDDSRFASVAYVQQIWWFQVDGEIDFPFPAGTYSVYFRLQLGKPGKRFGWKVVDTEQVHGWNIKPVRFQLSTEDGQHSSSQCMLTEAGNWSHYHAGDFVVGKSKSSSTKIKFSMTQIDCTHTKGGLCVDSVVVYPSSCKDRLMQI.

One can recognise an F-box domain in the interval 23 to 69 (QPGLGDLPESCVALILQNLDPVEICRFSKLNTAFHGASWADFVWESK).

Part of a SCF (ASK-cullin-F-box) protein ligase complex. Interacts with SKP1A/ASK1.

It is found in the nucleus. It functions in the pathway protein modification; protein ubiquitination. In terms of biological role, component of SCF(ASK-cullin-F-box) E3 ubiquitin ligase complexes, which may mediate the ubiquitination and subsequent proteasomal degradation of target proteins. This is F-box protein PP2-A11 (PP2A11) from Arabidopsis thaliana (Mouse-ear cress).